Consider the following 79-residue polypeptide: Small ribosomal subunit protein bS18 (79 aa).

This sequence belongs to the bacterial ribosomal protein bS18 family. As to quaternary structure, part of the 30S ribosomal subunit. Forms a tight heterodimer with protein bS6.

Functionally, binds as a heterodimer with protein bS6 to the central domain of the 16S rRNA, where it helps stabilize the platform of the 30S subunit. The protein is Small ribosomal subunit protein bS18 of Streptococcus pneumoniae (strain Hungary19A-6).